An 814-amino-acid chain; its full sequence is Phenylalanine--tRNA ligase beta subunit (814 aa).

Residues 39 to 153 (SARAKGVVVG…ELPALGAPVA (115 aa)) form the tRNA-binding domain. The B5 domain maps to 414 to 498 (ADASSVLLRR…RLVGFDRFGA (85 aa)). Mg(2+) contacts are provided by Asp-476, Asp-482, Glu-485, and Glu-486. Positions 720–813 (PTVPASERDL…LVKQHGAELR (94 aa)) constitute an FDX-ACB domain.

Belongs to the phenylalanyl-tRNA synthetase beta subunit family. Type 1 subfamily. Tetramer of two alpha and two beta subunits. It depends on Mg(2+) as a cofactor.

Its subcellular location is the cytoplasm. It catalyses the reaction tRNA(Phe) + L-phenylalanine + ATP = L-phenylalanyl-tRNA(Phe) + AMP + diphosphate + H(+). The polypeptide is Phenylalanine--tRNA ligase beta subunit (Parasynechococcus marenigrum (strain WH8102)).